Here is a 337-residue protein sequence, read N- to C-terminus: Cytoskeleton protein RodZ (337 aa).

Over 1–111 (MNTEATHDQN…LGKRRKKRDG (111 aa)) the chain is Cytoplasmic. Residues 19–71 (LRNAREQLGLSQQAVAERLCLKVSTVRDIEEDKAPADLASTFLRGYIRSYARL) enclose the HTH cro/C1-type domain. The H-T-H motif DNA-binding region spans 30–49 (QQAVAERLCLKVSTVRDIEE). Residues 112–132 (WLMTFTWLVLFVVIGLSGAWW) form a helical; Signal-anchor for type II membrane protein membrane-spanning segment. The Periplasmic portion of the chain corresponds to 133–337 (WQDRKAQQEE…TLNAEQSPAQ (205 aa)). The segment covering 144 to 167 (TTMADQSSAELSSNSEQGQSVPLN) has biased composition (polar residues). Positions 144–235 (TTMADQSSAE…PTAATTPDGA (92 aa)) are disordered. The segment covering 168–207 (TSTTTDPATTSTPPASVDTTATNTQTPAVTAPAPAVDPQQ) has biased composition (low complexity). Residues 208-218 (NAVVSPSQANV) are compositionally biased toward polar residues. Low complexity predominate over residues 219–235 (DTAATPAPTAATTPDGA).

It belongs to the RodZ family.

The protein resides in the cell inner membrane. Its function is as follows. Cytoskeletal protein that is involved in cell-shape control through regulation of the length of the long axis. The sequence is that of Cytoskeleton protein RodZ from Escherichia coli (strain K12 / MC4100 / BW2952).